The following is a 171-amino-acid chain: Small ribosomal subunit protein uS5 (171 aa).

Positions 16–79 (LREKMISVNR…EEARRKLVKI (64 aa)) constitute an S5 DRBM domain.

It belongs to the universal ribosomal protein uS5 family. As to quaternary structure, part of the 30S ribosomal subunit. Contacts proteins S4 and S8.

With S4 and S12 plays an important role in translational accuracy. In terms of biological role, located at the back of the 30S subunit body where it stabilizes the conformation of the head with respect to the body. This is Small ribosomal subunit protein uS5 from Thiobacillus denitrificans (strain ATCC 25259 / T1).